A 406-amino-acid polypeptide reads, in one-letter code: Cysteine desulfurase (406 aa).

K226 carries the post-translational modification N6-(pyridoxal phosphate)lysine. C364 acts as the Cysteine persulfide intermediate in catalysis.

It belongs to the class-V pyridoxal-phosphate-dependent aminotransferase family. Csd subfamily. As to quaternary structure, homodimer. Interacts with SufE and the SufBCD complex composed of SufB, SufC and SufD. The interaction with SufE is required to mediate the direct transfer of the sulfur atom from the S-sulfanylcysteine. Pyridoxal 5'-phosphate serves as cofactor.

Its subcellular location is the cytoplasm. The enzyme catalyses (sulfur carrier)-H + L-cysteine = (sulfur carrier)-SH + L-alanine. It carries out the reaction L-selenocysteine + AH2 = hydrogenselenide + L-alanine + A + H(+). Its pathway is cofactor biosynthesis; iron-sulfur cluster biosynthesis. Cysteine desulfurases mobilize the sulfur from L-cysteine to yield L-alanine, an essential step in sulfur metabolism for biosynthesis of a variety of sulfur-containing biomolecules. Component of the suf operon, which is activated and required under specific conditions such as oxidative stress and iron limitation. Acts as a potent selenocysteine lyase in vitro, that mobilizes selenium from L-selenocysteine. Selenocysteine lyase activity is however unsure in vivo. The chain is Cysteine desulfurase from Escherichia coli O7:K1 (strain IAI39 / ExPEC).